The following is a 459-amino-acid chain: Vacuolar fusion protein CCZ1 homolog (459 aa).

It belongs to the CCZ1 family.

In Nematostella vectensis (Starlet sea anemone), this protein is Vacuolar fusion protein CCZ1 homolog.